The primary structure comprises 450 residues: NADP-specific glutamate dehydrogenase (450 aa).

Lys-111 is an active-site residue.

The protein belongs to the Glu/Leu/Phe/Val dehydrogenases family. Homohexamer.

The catalysed reaction is L-glutamate + NADP(+) + H2O = 2-oxoglutarate + NH4(+) + NADPH + H(+). This Hebeloma cylindrosporum protein is NADP-specific glutamate dehydrogenase.